Reading from the N-terminus, the 347-residue chain is Protein-glutamate methylesterase/protein-glutamine glutaminase 1 (347 aa).

The region spanning R6–K123 is the Response regulatory domain. D57 bears the 4-aspartylphosphate mark. The 193-residue stretch at F150–R342 folds into the CheB-type methylesterase domain. Active-site residues include S162, H188, and D284.

This sequence belongs to the CheB family. Phosphorylated by CheA. Phosphorylation of the N-terminal regulatory domain activates the methylesterase activity.

It is found in the cytoplasm. It catalyses the reaction [protein]-L-glutamate 5-O-methyl ester + H2O = L-glutamyl-[protein] + methanol + H(+). The catalysed reaction is L-glutaminyl-[protein] + H2O = L-glutamyl-[protein] + NH4(+). Functionally, involved in chemotaxis. Part of a chemotaxis signal transduction system that modulates chemotaxis in response to various stimuli. Catalyzes the demethylation of specific methylglutamate residues introduced into the chemoreceptors (methyl-accepting chemotaxis proteins or MCP) by CheR. Also mediates the irreversible deamidation of specific glutamine residues to glutamic acid. This is Protein-glutamate methylesterase/protein-glutamine glutaminase 1 from Rhizobium johnstonii (strain DSM 114642 / LMG 32736 / 3841) (Rhizobium leguminosarum bv. viciae).